Here is a 280-residue protein sequence, read N- to C-terminus: Probable endonuclease 4 (280 aa).

Zn(2+) is bound by residues H69, H109, E145, D179, H182, H216, D229, H231, and E261.

Belongs to the AP endonuclease 2 family. Zn(2+) is required as a cofactor.

It catalyses the reaction Endonucleolytic cleavage to 5'-phosphooligonucleotide end-products.. Endonuclease IV plays a role in DNA repair. It cleaves phosphodiester bonds at apurinic or apyrimidinic (AP) sites, generating a 3'-hydroxyl group and a 5'-terminal sugar phosphate. This chain is Probable endonuclease 4, found in Aliarcobacter butzleri (strain RM4018) (Arcobacter butzleri).